We begin with the raw amino-acid sequence, 116 residues long: Photosystem II assembly factor Psb28 protein (116 aa).

Belongs to the Psb28 family. Part of a photosystem II (PSII) assembly intermediate complex PSII-I; crystallized from a strain deleted of psbJ, it forms monomeric PSII before addition of the oxygen evolving complex. PSII-I includes 3 assembly factors not found in mature PSII (Psb27, Psb28 and Psb34). This protein binds to the cytoplasmic face of D1 and D2 (psbA and psbD), contacting CP47 (psbB) directly above the quinone b-binding site.

It is found in the cellular thylakoid membrane. In terms of biological role, a photosystem II (PSII) assembly factor that binds PSII during biogenesis, protecting the complex until water splitting is activated. The protein is Photosystem II assembly factor Psb28 protein of Thermosynechococcus vestitus (strain NIES-2133 / IAM M-273 / BP-1).